The primary structure comprises 88 residues: Elongation factor 1-beta (88 aa).

Belongs to the EF-1-beta/EF-1-delta family.

Promotes the exchange of GDP for GTP in EF-1-alpha/GDP, thus allowing the regeneration of EF-1-alpha/GTP that could then be used to form the ternary complex EF-1-alpha/GTP/AAtRNA. This Halorubrum lacusprofundi (strain ATCC 49239 / DSM 5036 / JCM 8891 / ACAM 34) protein is Elongation factor 1-beta.